The primary structure comprises 367 residues: RYamide receptor (367 aa).

At 1–35 (MDANTTRNESFSLDCELVNPNSTLANVYFLSAVYS) the chain is on the extracellular side. Residues N4, N8, and N21 are each glycosylated (N-linked (GlcNAc...) asparagine). Residues 36–56 (MYAIIFVVALIGNSFVCYIVL) traverse the membrane as a helical segment. Over 57-66 (SSPPMRTVTN) the chain is Cytoplasmic. The helical transmembrane segment at 67 to 87 (FFILNLAIGDVLITLLCVPFT) threads the bilayer. Topologically, residues 88–113 (SVSLLMQYWPFGGILCPVVNYSQALS) are extracellular. N-linked (GlcNAc...) asparagine glycosylation occurs at N107. A helical membrane pass occupies residues 114 to 134 (VFVSAYTLVAISIDKYMIIMW). The Cytoplasmic segment spans residues 135-143 (PLKPRISKR). The helical transmembrane segment at 144-164 (FATYIIALVWLIAGITVLPSA) threads the bilayer. The Extracellular segment spans residues 165 to 212 (TFTTLINDENILGTSAYEQCDKYICAEEYSKVGQEYGDLYTKVLMFLQ). The helical transmembrane segment at 213-233 (YVIPSLVLLFTYTSIGVVIWC) threads the bilayer. Residues 234–258 (HRIPGEAENSRDQRIAKNKTKMIKM) lie on the Cytoplasmic side of the membrane. The helical transmembrane segment at 259–279 (MVTVVCVYTICWLPYNVLMIF) threads the bilayer. At 280 to 282 (KEH) the chain is on the extracellular side. Residues 283–303 (ISGSVMVYLYFPLHGLAMSHA) form a helical membrane-spanning segment. The Cytoplasmic segment spans residues 304-367 (CYNPIIYCYM…EITRAQPTSA (64 aa)).

This sequence belongs to the G-protein coupled receptor 1 family.

The protein resides in the cell membrane. Functionally, receptor for the neuropeptides RYamide-1 and RYamide-2. The activity of this receptor is mediated by G proteins which activate a phosphatidyl-inositol-calcium second messenger system. RYamide-2 is the most potent activator. This is RYamide receptor from Tribolium castaneum (Red flour beetle).